The following is a 140-amino-acid chain: N14 matrix protein (140 aa).

Positions 1–25 are cleaved as a signal peptide; that stretch reads MACTLRLTIAALVLLGICHLSRPVA.

It belongs to the N16 matrix protein family. In terms of assembly, heterooligomer; disulfide-linked. Pif97, Pif80, N16 and other proteins form a complex. As to expression, component of conchiolin, the organic matrix of nacre. Only expressed in the dorsal region of the mantle.

It is found in the secreted. Its subcellular location is the extracellular space. The protein localises to the extracellular matrix. Its function is as follows. May be specifically involved in the formation of the nacreous layer. The polypeptide is N14 matrix protein (Pinctada maxima (Silver-lipped pearl oyster)).